The primary structure comprises 304 residues: Putative S-adenosyl-L-methionine-dependent methyltransferase MUL_0816 (304 aa).

S-adenosyl-L-methionine is bound by residues Asp130 and Asp159 to Leu160.

It belongs to the UPF0677 family.

Functionally, exhibits S-adenosyl-L-methionine-dependent methyltransferase activity. The sequence is that of Putative S-adenosyl-L-methionine-dependent methyltransferase MUL_0816 from Mycobacterium ulcerans (strain Agy99).